The primary structure comprises 746 residues: Histone-lysine N-methyltransferase EZH2 (746 aa).

The interval 1 to 340 (MGQTGKKSEK…AKEFAAALTA (340 aa)) is interaction with DNMT1, DNMT3A and DNMT3B. A Phosphoserine; by PKB/AKT1 modification is found at Ser21. An interaction with EED region spans residues 39–68 (KTMFSSNRQKILERTETLNQEWKQRRIQPV). The O-linked (GlcNAc) serine glycan is linked to Ser75. A Phosphoserine modification is found at Ser76. The disordered stretch occupies residues 180-217 (QYNDDDDDDDGDDPDEREEKQKDLEDNRDDKETCPPRK). The span at 182 to 195 (NDDDDDDDGDDPDE) shows a compositional bias: acidic residues. The segment covering 196–217 (REEKQKDLEDNRDDKETCPPRK) has biased composition (basic and acidic residues). Residues 329 to 522 (EGAKEFAAAL…SSNHVYNYQP (194 aa)) are interaction with CDYL. At Thr339 the chain carries Phosphothreonine. Positions 340-426 (AERIKTPPKR…PIKMKPNIEP (87 aa)) are disordered. The residue at position 345 (Thr345) is a Phosphothreonine; by CDK1 and CDK2. Residues 345–357 (TPPKRPGGRRRGR) show a composition bias toward basic residues. Phosphoserine is present on residues Ser363 and Ser366. Thr367 is subject to Phosphothreonine. The segment covering 374–385 (ESKDTDSDREAG) has biased composition (basic and acidic residues). Thr487 bears the Phosphothreonine mark. The region spanning 503–605 (CRKIQLKKDG…SKNVSCKNCS (103 aa)) is the CXC domain. The SET domain occupies 612–727 (KHLLLAPSDV…TGEELFFDYR (116 aa)). Lys634 participates in a covalent cross-link: Glycyl lysine isopeptide (Lys-Gly) (interchain with G-Cter in SUMO2).

Belongs to the class V-like SAM-binding methyltransferase superfamily. Histone-lysine methyltransferase family. EZ subfamily. Component of the PRC2/EED-EZH2 complex, which includes EED, EZH2, SUZ12, RBBP4 and RBBP7 and possibly AEBP2. The minimum components required for methyltransferase activity of the PRC2/EED-EZH2 complex are EED, EZH2 and SUZ12. The PRC2 complex may also interact with DNMT1, DNMT3A, DNMT3B and PHF1 via the EZH2 subunit and with SIRT1 via the SUZ12 subunit. Interacts with HDAC1 and HDAC2. Binds ATRX via the SET domain. Interacts with PRAME. Interacts with CDYL. Interacts with EED. Interacts with BMAL1. Interacts with CLOCK and CRY1. Interacts with DNMT3L; the interaction is direct. Interacts with EZHIP; the interaction blocks EZH2 methyltransferase activity. Interacts with ZNF263; recruited to the SIX3 promoter along with other proteins involved in chromatin modification and transcriptional corepression where it contributes to transcriptional repression. Interacts with ARMC12. Interacts with ZMYND8; the interaction is dependent on the presence of chromatin. Interacts with DDX18; this interaction inhibits the PRC2 complex. Phosphorylated by AKT1. Phosphorylation by AKT1 reduces methyltransferase activity. Phosphorylation at Thr-345 by CDK1 and CDK2 promotes maintenance of H3K27me3 levels at EZH2-target loci, thus leading to epigenetic gene silencing. Post-translationally, sumoylated. In terms of processing, glycosylated: O-GlcNAcylation at Ser-75 by OGT increases stability of EZH2 and facilitates the formation of H3K27me3 by the PRC2/EED-EZH2 complex. As to expression, present in actively dividing cells. Widely expressed in early embryos. In later embryogenesis, expression restricted to central and peripheral nervous system, liver and thymus. In adult, highest expression in spleen, testis and placenta. Lower levels in intestine, muscle and ovary and very low levels in brain and liver. No expression in heart, thyroid gland, lung and kidney.

It localises to the nucleus. The protein resides in the chromosome. The enzyme catalyses L-lysyl(27)-[histone H3] + 3 S-adenosyl-L-methionine = N(6),N(6),N(6)-trimethyl-L-lysyl(27)-[histone H3] + 3 S-adenosyl-L-homocysteine + 3 H(+). Polycomb group (PcG) protein. Catalytic subunit of the PRC2/EED-EZH2 complex, which methylates (H3K9me) and 'Lys-27' (H3K27me) of histone H3, leading to transcriptional repression of the affected target gene. Able to mono-, di- and trimethylate 'Lys-27' of histone H3 to form H3K27me1, H3K27me2 and H3K27me3, respectively. Displays a preference for substrates with less methylation, loses activity when progressively more methyl groups are incorporated into H3K27, H3K27me0 &gt; H3K27me1 &gt; H3K27me2. Compared to EZH1-containing complexes, it is more abundant in embryonic stem cells and plays a major role in forming H3K27me3, which is required for embryonic stem cell identity and proper differentiation. The PRC2/EED-EZH2 complex may also serve as a recruiting platform for DNA methyltransferases, thereby linking two epigenetic repression systems. Genes repressed by the PRC2/EED-EZH2 complex include HOXA7, HOXB6 and HOXC8. EZH2 can also methylate non-histone proteins such as the transcription factor GATA4 and the nuclear receptor RORA. Regulates the circadian clock via histone methylation at the promoter of the circadian genes. Essential for the CRY1/2-mediated repression of the transcriptional activation of PER1/2 by the CLOCK-BMAL1 heterodimer; involved in the di and trimethylation of 'Lys-27' of histone H3 on PER1/2 promoters which is necessary for the CRY1/2 proteins to inhibit transcription. In Mus musculus (Mouse), this protein is Histone-lysine N-methyltransferase EZH2.